The following is a 281-amino-acid chain: Octanoyl-[GcvH]:protein N-octanoyltransferase (281 aa).

In terms of domain architecture, BPL/LPL catalytic spans 44-250 (GESAATMRSW…TLQQFAPKLT (207 aa)). The active-site Acyl-thioester intermediate is the cysteine 149.

It belongs to the octanoyltransferase LipL family.

The catalysed reaction is N(6)-octanoyl-L-lysyl-[glycine-cleavage complex H protein] + L-lysyl-[lipoyl-carrier protein] = N(6)-octanoyl-L-lysyl-[lipoyl-carrier protein] + L-lysyl-[glycine-cleavage complex H protein]. The protein operates within protein modification; protein lipoylation via endogenous pathway; protein N(6)-(lipoyl)lysine from octanoyl-[acyl-carrier-protein]. Functionally, catalyzes the amidotransfer (transamidation) of the octanoyl moiety from octanoyl-GcvH to the lipoyl domain of the E2 subunit of lipoate-dependent enzymes. In Bacillus anthracis, this protein is Octanoyl-[GcvH]:protein N-octanoyltransferase.